We begin with the raw amino-acid sequence, 807 residues long: Leucine--tRNA ligase (807 aa).

The 'HIGH' region signature appears at 38 to 49 (PYPSGSGLHVGH). Residues 579 to 583 (KMSKS) carry the 'KMSKS' region motif. An ATP-binding site is contributed by lysine 582.

It belongs to the class-I aminoacyl-tRNA synthetase family.

The protein localises to the cytoplasm. It carries out the reaction tRNA(Leu) + L-leucine + ATP = L-leucyl-tRNA(Leu) + AMP + diphosphate. This is Leucine--tRNA ligase from Mycoplasmopsis pulmonis (strain UAB CTIP) (Mycoplasma pulmonis).